We begin with the raw amino-acid sequence, 105 residues long: Iron-sulfur cluster assembly protein CyaY (105 aa).

The protein belongs to the frataxin family.

In terms of biological role, involved in iron-sulfur (Fe-S) cluster assembly. May act as a regulator of Fe-S biogenesis. The sequence is that of Iron-sulfur cluster assembly protein CyaY from Paraburkholderia phytofirmans (strain DSM 17436 / LMG 22146 / PsJN) (Burkholderia phytofirmans).